The sequence spans 359 residues: Tyrosine-protein phosphatase non-receptor type 7 (359 aa).

The disordered stretch occupies residues 1–33; sequence MVQACEGRSRAQLPTLSLGADMTQPPPTKAPAK. The segment at 38–51 is interaction with MAP kinases; it reads LQERRGSSVALMLD. S44 carries the post-translational modification Phosphoserine. Residue T66 is modified to Phosphothreonine. Phosphoserine occurs at positions 93 and 143. In terms of domain architecture, Tyrosine-protein phosphatase spans 97–349; sequence LEEEFLKIPS…QFLHHTLALY (253 aa). Substrate contacts are provided by residues D257, 290–296, and Q334; that span reads CSAGIGR. The Phosphocysteine intermediate role is filled by C290. Position 290 is a cysteine sulfenic acid (-SOH) (C290).

Belongs to the protein-tyrosine phosphatase family. Non-receptor class subfamily. Post-translationally, oxidized at active site cysteine. Treatment with pervanadate (vanadate and H(2)O(2)) or with antigen enhanced oxidation of active site cysteine. As to expression, expressed in bone marrow-derived mast cells.

Its subcellular location is the cytoplasm. It localises to the cytoskeleton. The enzyme catalyses O-phospho-L-tyrosyl-[protein] + H2O = L-tyrosyl-[protein] + phosphate. Its activity is regulated as follows. Inhibited upon FCER1A triggering. In terms of biological role, may play a role in the regulation of T and B-lymphocyte development and signal transduction. This is Tyrosine-protein phosphatase non-receptor type 7 (Ptpn7) from Mus musculus (Mouse).